Here is a 91-residue protein sequence, read N- to C-terminus: Small ribosomal subunit protein uS19 (91 aa).

Belongs to the universal ribosomal protein uS19 family.

Its function is as follows. Protein S19 forms a complex with S13 that binds strongly to the 16S ribosomal RNA. This chain is Small ribosomal subunit protein uS19, found in Neorickettsia sennetsu (strain ATCC VR-367 / Miyayama) (Ehrlichia sennetsu).